The chain runs to 339 residues: Glyceraldehyde-3-phosphate dehydrogenase (339 aa).

NAD(+)-binding positions include Arg12–Ile13, Asp35, and Lys84. Residues Ser155–Thr157, Thr186, Thr215–Gly216, and Arg238 each bind D-glyceraldehyde 3-phosphate. Catalysis depends on Cys156, which acts as the Nucleophile. Asn320 is a binding site for NAD(+).

This sequence belongs to the glyceraldehyde-3-phosphate dehydrogenase family. Homotetramer.

It localises to the cytoplasm. The enzyme catalyses D-glyceraldehyde 3-phosphate + phosphate + NAD(+) = (2R)-3-phospho-glyceroyl phosphate + NADH + H(+). It functions in the pathway carbohydrate degradation; glycolysis; pyruvate from D-glyceraldehyde 3-phosphate: step 1/5. The protein is Glyceraldehyde-3-phosphate dehydrogenase (GAPD) of Mastigamoeba balamuthi (Phreatamoeba balamuthi).